Consider the following 454-residue polypeptide: Bifunctional protein GlmU (454 aa).

Positions 1 to 226 (MALNVVILAA…AIEVEGANNR (226 aa)) are pyrophosphorylase. UDP-N-acetyl-alpha-D-glucosamine-binding positions include 8 to 11 (LAAG), lysine 22, glutamine 73, 78 to 79 (GT), 100 to 102 (YGD), glycine 137, glutamate 151, asparagine 166, and asparagine 224. Aspartate 102 provides a ligand contact to Mg(2+). Asparagine 224 is a binding site for Mg(2+). The tract at residues 227–247 (VQLAQLERAYQAREAEKLMIA) is linker. The interval 248–454 (GANLRDPSRI…GWQRPVKIKK (207 aa)) is N-acetyltransferase. UDP-N-acetyl-alpha-D-glucosamine is bound by residues arginine 330 and lysine 348. Histidine 360 functions as the Proton acceptor in the catalytic mechanism. UDP-N-acetyl-alpha-D-glucosamine-binding residues include tyrosine 363 and asparagine 374. Residues alanine 377, 383–384 (NY), serine 402, alanine 420, and arginine 437 contribute to the acetyl-CoA site.

It in the N-terminal section; belongs to the N-acetylglucosamine-1-phosphate uridyltransferase family. In the C-terminal section; belongs to the transferase hexapeptide repeat family. Homotrimer. Mg(2+) is required as a cofactor.

The protein resides in the cytoplasm. It carries out the reaction alpha-D-glucosamine 1-phosphate + acetyl-CoA = N-acetyl-alpha-D-glucosamine 1-phosphate + CoA + H(+). The catalysed reaction is N-acetyl-alpha-D-glucosamine 1-phosphate + UTP + H(+) = UDP-N-acetyl-alpha-D-glucosamine + diphosphate. The protein operates within nucleotide-sugar biosynthesis; UDP-N-acetyl-alpha-D-glucosamine biosynthesis; N-acetyl-alpha-D-glucosamine 1-phosphate from alpha-D-glucosamine 6-phosphate (route II): step 2/2. It participates in nucleotide-sugar biosynthesis; UDP-N-acetyl-alpha-D-glucosamine biosynthesis; UDP-N-acetyl-alpha-D-glucosamine from N-acetyl-alpha-D-glucosamine 1-phosphate: step 1/1. It functions in the pathway bacterial outer membrane biogenesis; LPS lipid A biosynthesis. Catalyzes the last two sequential reactions in the de novo biosynthetic pathway for UDP-N-acetylglucosamine (UDP-GlcNAc). The C-terminal domain catalyzes the transfer of acetyl group from acetyl coenzyme A to glucosamine-1-phosphate (GlcN-1-P) to produce N-acetylglucosamine-1-phosphate (GlcNAc-1-P), which is converted into UDP-GlcNAc by the transfer of uridine 5-monophosphate (from uridine 5-triphosphate), a reaction catalyzed by the N-terminal domain. This chain is Bifunctional protein GlmU, found in Shewanella sp. (strain MR-4).